The sequence spans 188 residues: Holliday junction branch migration complex subunit RuvA (188 aa).

Positions 1–62 (MIVGVRGVLV…EDAQLLYGFL (62 aa)) are domain I. Positions 63–135 (ELGEKKLFER…LSGFDTELII (73 aa)) are domain II. The tract at residues 135 to 139 (ISASE) is flexible linker. The interval 140–188 (PKSLAVAQASEALESLGFKKDKISKALGSCSAVDTAILVKEALKLLQTI) is domain III.

This sequence belongs to the RuvA family. In terms of assembly, homotetramer. Forms an RuvA(8)-RuvB(12)-Holliday junction (HJ) complex. HJ DNA is sandwiched between 2 RuvA tetramers; dsDNA enters through RuvA and exits via RuvB. An RuvB hexamer assembles on each DNA strand where it exits the tetramer. Each RuvB hexamer is contacted by two RuvA subunits (via domain III) on 2 adjacent RuvB subunits; this complex drives branch migration. In the full resolvosome a probable DNA-RuvA(4)-RuvB(12)-RuvC(2) complex forms which resolves the HJ.

Its subcellular location is the cytoplasm. In terms of biological role, the RuvA-RuvB-RuvC complex processes Holliday junction (HJ) DNA during genetic recombination and DNA repair, while the RuvA-RuvB complex plays an important role in the rescue of blocked DNA replication forks via replication fork reversal (RFR). RuvA specifically binds to HJ cruciform DNA, conferring on it an open structure. The RuvB hexamer acts as an ATP-dependent pump, pulling dsDNA into and through the RuvAB complex. HJ branch migration allows RuvC to scan DNA until it finds its consensus sequence, where it cleaves and resolves the cruciform DNA. This is Holliday junction branch migration complex subunit RuvA from Sulfurimonas denitrificans (strain ATCC 33889 / DSM 1251) (Thiomicrospira denitrificans (strain ATCC 33889 / DSM 1251)).